The following is a 388-amino-acid chain: Chorismate synthase (388 aa).

NADP(+)-binding residues include Arg39 and Arg45. Residues 130–132 (RSS), 251–252 (NA), Gly296, 311–315 (KPIPT), and Arg337 each bind FMN.

Belongs to the chorismate synthase family. As to quaternary structure, homotetramer. Requires FMNH2 as cofactor.

It carries out the reaction 5-O-(1-carboxyvinyl)-3-phosphoshikimate = chorismate + phosphate. Its pathway is metabolic intermediate biosynthesis; chorismate biosynthesis; chorismate from D-erythrose 4-phosphate and phosphoenolpyruvate: step 7/7. In terms of biological role, catalyzes the anti-1,4-elimination of the C-3 phosphate and the C-6 proR hydrogen from 5-enolpyruvylshikimate-3-phosphate (EPSP) to yield chorismate, which is the branch point compound that serves as the starting substrate for the three terminal pathways of aromatic amino acid biosynthesis. This reaction introduces a second double bond into the aromatic ring system. This is Chorismate synthase from Streptococcus pneumoniae (strain 70585).